A 247-amino-acid chain; its full sequence is Carboxy-S-adenosyl-L-methionine synthase (247 aa).

S-adenosyl-L-methionine is bound by residues Y40, 65–67, 90–91, 122–123, N137, and R204; these read GAS, DN, and DI.

This sequence belongs to the class I-like SAM-binding methyltransferase superfamily. Cx-SAM synthase family. Homodimer.

It carries out the reaction prephenate + S-adenosyl-L-methionine = carboxy-S-adenosyl-L-methionine + 3-phenylpyruvate + H2O. Catalyzes the conversion of S-adenosyl-L-methionine (SAM) to carboxy-S-adenosyl-L-methionine (Cx-SAM). The chain is Carboxy-S-adenosyl-L-methionine synthase from Pseudomonas entomophila (strain L48).